Reading from the N-terminus, the 374-residue chain is Glutamate 5-kinase (374 aa).

Residue Lys8 participates in ATP binding. Substrate contacts are provided by Ser49, Asp136, and Asn148. ATP contacts are provided by residues 168 to 169 (TD) and 211 to 217 (TGGMQTK). Residues 276–354 (QGILTLDDGA…TQIRQILGYG (79 aa)) enclose the PUA domain.

Belongs to the glutamate 5-kinase family.

The protein localises to the cytoplasm. It catalyses the reaction L-glutamate + ATP = L-glutamyl 5-phosphate + ADP. Its pathway is amino-acid biosynthesis; L-proline biosynthesis; L-glutamate 5-semialdehyde from L-glutamate: step 1/2. In terms of biological role, catalyzes the transfer of a phosphate group to glutamate to form L-glutamate 5-phosphate. The sequence is that of Glutamate 5-kinase from Picosynechococcus sp. (strain ATCC 27264 / PCC 7002 / PR-6) (Agmenellum quadruplicatum).